An 891-amino-acid chain; its full sequence is Inter-alpha-trypsin inhibitor heavy chain H3 (891 aa).

The signal sequence occupies residues 1-20; that stretch reads MALAQWPYLILALLSGLAVS. Positions 21–34 are excised as a propeptide; sequence GFPRNPSLLLGKRS. The VIT domain maps to 29 to 158; it reads LLGKRSLPGR…KVTFELTYEE (130 aa). The N-linked (GlcNAc...) asparagine glycan is linked to N91. Residues 284–467 form the VWFA domain; sequence SVVFVIDVSG…LQLQGFYEEV (184 aa). An Aspartate 1-(chondroitin 4-sulfate)-ester modification is found at D651. Residues 652-891 constitute a propeptide that is removed on maturation; it reads PHFIIQIPEK…HRDYIVPNLF (240 aa).

The protein belongs to the ITIH family. In terms of assembly, I-alpha-I plasma protease inhibitors are assembled from one or two heavy chains (H1, H2 or H3) and one light chain, bikunin. Inter-alpha-inhibitor (I-alpha-I) is composed of H1, H2 and bikunin, inter-alpha-like inhibitor (I-alpha-LI) of H2 and bikunin, and pre-alpha-inhibitor (P-alpha-I) of H3 and bikunin.

The protein resides in the secreted. In terms of biological role, may act as a carrier of hyaluronan in serum or as a binding protein between hyaluronan and other matrix protein, including those on cell surfaces in tissues to regulate the localization, synthesis and degradation of hyaluronan which are essential to cells undergoing biological processes. In Bos taurus (Bovine), this protein is Inter-alpha-trypsin inhibitor heavy chain H3 (ITIH3).